Here is a 243-residue protein sequence, read N- to C-terminus: Geranylgeranylglyceryl phosphate synthase (243 aa).

Residues D22 and S51 each contribute to the Mg(2+) site. Sn-glycerol 1-phosphate contacts are provided by residues 170 to 176 (YLESGSG), 201 to 202 (GG), and 223 to 224 (GT).

This sequence belongs to the GGGP/HepGP synthase family. Group II subfamily. Requires Mg(2+) as cofactor.

The protein localises to the cytoplasm. The enzyme catalyses sn-glycerol 1-phosphate + (2E,6E,10E)-geranylgeranyl diphosphate = sn-3-O-(geranylgeranyl)glycerol 1-phosphate + diphosphate. It participates in membrane lipid metabolism; glycerophospholipid metabolism. Its function is as follows. Prenyltransferase that catalyzes the transfer of the geranylgeranyl moiety of geranylgeranyl diphosphate (GGPP) to the C3 hydroxyl of sn-glycerol-1-phosphate (G1P). This reaction is the first ether-bond-formation step in the biosynthesis of archaeal membrane lipids. This is Geranylgeranylglyceryl phosphate synthase from Picrophilus torridus (strain ATCC 700027 / DSM 9790 / JCM 10055 / NBRC 100828 / KAW 2/3).